We begin with the raw amino-acid sequence, 287 residues long: Ribosomal RNA small subunit methyltransferase A (287 aa).

Asn-35, Val-37, Gly-62, Glu-83, Asp-113, and Asn-131 together coordinate S-adenosyl-L-methionine.

The protein belongs to the class I-like SAM-binding methyltransferase superfamily. rRNA adenine N(6)-methyltransferase family. RsmA subfamily.

Its subcellular location is the cytoplasm. The catalysed reaction is adenosine(1518)/adenosine(1519) in 16S rRNA + 4 S-adenosyl-L-methionine = N(6)-dimethyladenosine(1518)/N(6)-dimethyladenosine(1519) in 16S rRNA + 4 S-adenosyl-L-homocysteine + 4 H(+). Specifically dimethylates two adjacent adenosines (A1518 and A1519) in the loop of a conserved hairpin near the 3'-end of 16S rRNA in the 30S particle. May play a critical role in biogenesis of 30S subunits. The sequence is that of Ribosomal RNA small subunit methyltransferase A from Thermobifida fusca (strain YX).